The chain runs to 150 residues: Ribonuclease K6 (150 aa).

The first 23 residues, 1-23 (MVLCFPLLLLLLVLWGPVCLLHA), serve as a signal peptide directing secretion. Residue His38 is the Proton acceptor of the active site. Disulfide bonds link Cys46-Cys104, Cys60-Cys114, Cys78-Cys129, and Cys85-Cys92. Asn55 carries N-linked (GlcNAc...) asparagine glycosylation. Residues 61–65 (KHQNT) and Lys86 each bind substrate. The N-linked (GlcNAc...) asparagine glycan is linked to Asn100. Arg105 provides a ligand contact to substrate. His145 functions as the Proton donor in the catalytic mechanism.

Belongs to the pancreatic ribonuclease family. Interacts (via N-terminus) with bacterial lipopolysaccharide (LPS).

Its subcellular location is the secreted. It localises to the lysosome. The protein localises to the cytoplasmic granule. Functionally, ribonuclease which shows a preference for the pyrimidines uridine and cytosine. Has potent antibacterial activity against a range of Gram-positive and Gram-negative bacteria, including P.aeruginosa, A.baumanii, M.luteus, S.aureus, E.faecalis, E.faecium, S.saprophyticus and E.coli. Causes loss of bacterial membrane integrity, and also promotes agglutination of Gram-negative bacteria. Probably contributes to urinary tract sterility. Bactericidal activity is independent of RNase activity. This is Ribonuclease K6 (RNASE6) from Miopithecus talapoin (Angolan talapoin).